A 1833-amino-acid polypeptide reads, in one-letter code: Proteasome activator complex subunit 4A (1833 aa).

2 HEAT repeats span residues 460 to 504 (PEGP…LVDC) and 983 to 1022 (NFCC…NHSG). Positions 1095 to 1122 (SSSPEPNPGAASEQEELEGRKREEQKNK) are disordered. Positions 1111 to 1122 (LEGRKREEQKNK) are enriched in basic and acidic residues. 4 HEAT repeats span residues 1164 to 1202 (LPLP…QLKR), 1344 to 1382 (DAFL…GSKH), 1626 to 1664 (SDQI…YNLF), and 1670 to 1708 (AKAV…CNFL). The segment at 1640–1728 (SRSSSWHARY…ESLSKTRLPK (89 aa)) is bromodomain-like (BRDL).

Belongs to the BLM10 family. In terms of assembly, homodimer. Interacts with the 20S and 26S proteasomes.

The protein resides in the cytoplasm. It is found in the cytosol. Its subcellular location is the nucleus. It localises to the nucleus speckle. In terms of biological role, associated component of the proteasome that specifically recognizes acetylated histones and promotes ATP- and ubiquitin-independent degradation of core histones during DNA damage response. Recognizes and binds acetylated histones via its bromodomain-like (BRDL) region and activates the proteasome by opening the gated channel for substrate entry. Binds to the core proteasome via its C-terminus, which occupies the same binding sites as the proteasomal ATPases, opening the closed structure of the proteasome via an active gating mechanism. involved in DNA damage response in somatic cells: binds to acetylated histones and promotes degradation of histones. In Danio rerio (Zebrafish), this protein is Proteasome activator complex subunit 4A (psme4a).